A 676-amino-acid polypeptide reads, in one-letter code: Capsid vertex component 1 (676 aa).

Low complexity predominate over residues 253-264 (HPVRPSSSRVAS). Residues 253 to 308 (HPVRPSSSRVASGLLQSAKGHGAQTSNTDPINNGSFDGVLEPPGQGRFTGKKNNSS) form a disordered region. The segment covering 275–287 (AQTSNTDPINNGS) has biased composition (polar residues).

This sequence belongs to the herpesviridae CVC1 protein family. As to quaternary structure, interacts (via C-terminus) with capsid vertex component 2/CVC2.

It localises to the virion. It is found in the host nucleus. Functionally, capsid vertex-specific component that plays a role during viral DNA encapsidation, assuring correct genome cleavage and presumably stabilizing capsids that contain full-length viral genomes. This is Capsid vertex component 1 from Varicella-zoster virus (strain Dumas) (HHV-3).